Reading from the N-terminus, the 326-residue chain is DNA repair protein RAD51 homolog 4 (326 aa).

Residues 1-83 (MGVLRAGLCP…ELKTSTAILS (83 aa)) form a preferentially binds ssDNA region. Residue 107-114 (GAPGSGKT) coordinates ATP.

This sequence belongs to the RecA family. RAD51 subfamily. As to quaternary structure, part of the BCDX2 complex consisting of RAD51B, RAD51C, RAD51D and XRCC2; the complex has a ring-like structure arranged into a flat disc around a central channel. In the absence of DNA, the BCDX2 subcomplex XRCC2:RAD51D formed a multimeric ring structure; in the presence of single-stranded DNA it formed a filamentous structure with the ssDNA. Interacts with SWSAP1 and ZSWIM7; involved in homologous recombination repair. Interacts with BLM; required for stimulation of BLM activity by the BCDX2 subcomplex XRCC2:RAD51D.

Its subcellular location is the nucleus. Functionally, involved in the homologous recombination repair (HRR) pathway of double-stranded DNA breaks arising during DNA replication or induced by DNA-damaging agents. Bind to single-stranded DNA (ssDNA) and has DNA-dependent ATPase activity. Part of the RAD51 paralog protein complex BCDX2 which acts in the BRCA1-BRCA2-dependent HR pathway. Upon DNA damage, BCDX2 acts downstream of BRCA2 recruitment and upstream of RAD51 recruitment. BCDX2 binds predominantly to the intersection of the four duplex arms of the Holliday junction and to junction of replication forks. The BCDX2 complex was originally reported to bind single-stranded DNA, single-stranded gaps in duplex DNA and specifically to nicks in duplex DNA. Involved in telomere maintenance. The BCDX2 subcomplex XRCC2:RAD51D can stimulate Holliday junction resolution by BLM. The protein is DNA repair protein RAD51 homolog 4 (RAD51D) of Bos taurus (Bovine).